We begin with the raw amino-acid sequence, 116 residues long: Non-specific lipid-transfer protein 5 (116 aa).

The signal sequence occupies residues Met1–Gly24. 4 disulfide bridges follow: Cys28/Cys75, Cys38/Cys52, Cys53/Cys98, and Cys73/Cys112.

Belongs to the plant LTP family.

Its function is as follows. Plant non-specific lipid-transfer proteins transfer phospholipids as well as galactolipids across membranes. May play a role in wax or cutin deposition in the cell walls of expanding epidermal cells and certain secretory tissues. The protein is Non-specific lipid-transfer protein 5 of Lens culinaris (Lentil).